The primary structure comprises 533 residues: Apolipoprotein N-acyltransferase (533 aa).

The next 5 helical transmembrane spans lie at 17–37, 72–92, 116–136, 165–185, and 190–210; these read FFLP…WPAV, LLFC…GGIL, GFRS…WAYM, GVWG…LLFM, and FQVK…PLLY. The region spanning 232 to 499 is the CN hydrolase domain; it reads VQPDIDPHEK…QSVLTADVPL (268 aa). The active-site Proton acceptor is the Glu-274. Lys-352 is an active-site residue. The active-site Nucleophile is Cys-410. The chain crosses the membrane as a helical span at residues 510-530; it reads PDLVPHVCLGIAGVLALVAAV.

Belongs to the CN hydrolase family. Apolipoprotein N-acyltransferase subfamily.

The protein resides in the cell inner membrane. It catalyses the reaction N-terminal S-1,2-diacyl-sn-glyceryl-L-cysteinyl-[lipoprotein] + a glycerophospholipid = N-acyl-S-1,2-diacyl-sn-glyceryl-L-cysteinyl-[lipoprotein] + a 2-acyl-sn-glycero-3-phospholipid + H(+). It participates in protein modification; lipoprotein biosynthesis (N-acyl transfer). Catalyzes the phospholipid dependent N-acylation of the N-terminal cysteine of apolipoprotein, the last step in lipoprotein maturation. The polypeptide is Apolipoprotein N-acyltransferase (Chlorobaculum tepidum (strain ATCC 49652 / DSM 12025 / NBRC 103806 / TLS) (Chlorobium tepidum)).